A 494-amino-acid chain; its full sequence is UPF0371 protein STER_1332 (494 aa).

The protein belongs to the UPF0371 family.

In Streptococcus thermophilus (strain ATCC BAA-491 / LMD-9), this protein is UPF0371 protein STER_1332.